The primary structure comprises 906 residues: Protein translocase subunit SecA (906 aa).

Residues Gln-89, 107 to 111, and Asp-502 contribute to the ATP site; that span reads GEGKT. Zn(2+) contacts are provided by Cys-890, Cys-892, Cys-901, and His-902.

Belongs to the SecA family. As to quaternary structure, monomer and homodimer. Part of the essential Sec protein translocation apparatus which comprises SecA, SecYEG and auxiliary proteins SecDF-YajC and YidC. The cofactor is Zn(2+).

The protein resides in the cell inner membrane. Its subcellular location is the cytoplasm. It carries out the reaction ATP + H2O + cellular proteinSide 1 = ADP + phosphate + cellular proteinSide 2.. Functionally, part of the Sec protein translocase complex. Interacts with the SecYEG preprotein conducting channel. Has a central role in coupling the hydrolysis of ATP to the transfer of proteins into and across the cell membrane, serving both as a receptor for the preprotein-SecB complex and as an ATP-driven molecular motor driving the stepwise translocation of polypeptide chains across the membrane. This chain is Protein translocase subunit SecA, found in Brucella canis (strain ATCC 23365 / NCTC 10854 / RM-666).